The following is a 2442-amino-acid chain: Piezo-type mechanosensitive ion channel component 1 (2442 aa).

Topologically, residues 1–5 are extracellular; it reads MTVPP. Residues 6–26 form a helical membrane-spanning segment; that stretch reads LLKSCVVKLLLPAALLAAAII. Residue Arg27 is a topological domain, cytoplasmic. A helical transmembrane segment spans residues 28-48; it reads PSFLSIGYVLLALVSAVLPPI. Over 49–56 the chain is Extracellular; it reads RKSLALPK. Residues 57 to 77 traverse the membrane as a helical segment; the sequence is LVGTFVIITFLFCLAVALGVG. Topologically, residues 78–122 are cytoplasmic; the sequence is SYQISEQVVHKNDRTYICNRSDTTLFRSIGLVRFHPTGTFESTRA. A helical transmembrane segment spans residues 123 to 143; that stretch reads FLPEIIATSAALLTIIIVMFL. Over 144-173 the chain is Extracellular; the sequence is SHRDEQLDVVGDVVTVRSESGREQRRQRKL. A helical transmembrane segment spans residues 174–196; it reads AAIMWSAIGNSLRRLTNFVLFLF. At 197 to 198 the chain is on the cytoplasmic side; it reads TA. A helical membrane pass occupies residues 199–219; it reads YVGIVKPSLSNSIYFLAFLFI. At 220 to 239 the chain is on the extracellular side; that stretch reads STWWSTYTPLRHGVYNQIKK. A helical transmembrane segment spans residues 240 to 260; the sequence is FLIFYSALHFLVLYTYQIPIV. At 261–303 the chain is on the cytoplasmic side; that stretch reads HHSWLPTGSFLPRLFGLTVLMDSSCPEWWKFPFVAPDFNDDDL. The helical transmembrane segment at 304 to 324 threads the bilayer; it reads IMKWPLYANPIVVLVFFYLTV. Over 325–454 the chain is Extracellular; sequence AQYKFTRNGS…GDKESAASKG (130 aa). 3 N-linked (GlcNAc...) asparagine glycosylation sites follow: Asn332, Asn392, and Asn440. The disordered stretch occupies residues 389–417; that stretch reads LLSNASSSANDDEQGRARSRSPLRNGEEQ. Residues 455-475 traverse the membrane as a helical segment; the sequence is MIAVMTFVIFHSYSIALTAMM. The Cytoplasmic segment spans residues 476–478; it reads TWA. Residues 479–499 form a helical membrane-spanning segment; it reads LLYHSIFGLILLILTCILWIF. The Extracellular portion of the chain corresponds to 500–506; that stretch reads RDTRKSS. A helical membrane pass occupies residues 507 to 527; it reads FAMAPIILMYIEFLLILQYFL. The Cytoplasmic portion of the chain corresponds to 528–552; it reads SMDIHAEIGDPAWMNFVGIEWTTLP. A helical membrane pass occupies residues 553–573; it reads VHAVIILCVQTLLTLPVFLLL. Topologically, residues 574–633 are extracellular; sequence RLARREKFYESLSDYERQRRINSYGTFGASKTGAGGVAVAKFQDPKSRKFAAFVEYLSNK. The helical transmembrane segment at 634 to 654 threads the bilayer; it reads VSVYFIFVVSVVLLVVSTCFA. Topologically, residues 655-656 are cytoplasmic; sequence PN. Residues 657 to 677 traverse the membrane as a helical segment; that stretch reads FYNILFFALWALNLIYLKFSF. At 678-683 the chain is on the extracellular side; sequence RLYRGL. The chain crosses the membrane as a helical span at residues 684–704; sequence AYAFWLTLTFYTSIVIIALYI. Topologically, residues 705-739 are cytoplasmic; sequence YQFPGVSQWIIRNTSLSQEWLNAIGLVDFRAIGES. Residues 740–760 form a helical membrane-spanning segment; it reads GALFLQLLAPIALFVVTMLQL. At 761–832 the chain is on the extracellular side; the sequence is KFFHGPWSRA…WRFFEVHISK (72 aa). The segment at 768 to 798 is disordered; that stretch reads SRATSPRRAENDPPTSTTEAAAVASTSGTQG. Low complexity predominate over residues 782-794; the sequence is TSTTEAAAVASTS. Residue Asn816 is glycosylated (N-linked (GlcNAc...) asparagine). Residues 833–853 traverse the membrane as a helical segment; the sequence is IVFVIIAIFIANNINALYIPL. Residues 854–874 lie on the Cytoplasmic side of the membrane; that stretch reads VILLSLAICLPSAADGIFSLF. Residues 875–895 form a helical membrane-spanning segment; that stretch reads MCAYLFLVALSKMIYQLDIVP. At 896–931 the chain is on the extracellular side; it reads ELSQIDRGVGADNCSHGNISMPEWFGLKKEVEGTEP. N-linked (GlcNAc...) asparagine glycans are attached at residues Asn908 and Asn913. A helical transmembrane segment spans residues 932 to 952; sequence IYMLFGVIVSIIALAFQSIVI. At 953–990 the chain is on the cytoplasmic side; it reads YRQRHYRASLGLPESMRAKVFPDFHHSHFDRSLKNAIQ. A helical membrane pass occupies residues 991-1011; the sequence is FLIDYGFYKFGLEITMIAIGI. Residue Asp1012 is a topological domain, extracellular. Residues 1013–1033 traverse the membrane as a helical segment; it reads IFNRMDALAAIQCFWLVLFAL. At 1034–1041 the chain is on the cytoplasmic side; it reads NKRVFVRR. A helical transmembrane segment spans residues 1042–1062; that stretch reads IWVFYVIYMAILYPLQFFSYV. At 1063–1096 the chain is on the extracellular side; sequence GLPPDSCIEYPWSYWIPSYSDDARFNLSYLLNLS. N-linked (GlcNAc...) asparagine glycans are attached at residues Asn1088 and Asn1094. A helical membrane pass occupies residues 1097–1117; the sequence is IYGVNWPSAYLIGDFFVLLLA. At 1118–1160 the chain is on the cytoplasmic side; sequence SCQLAVFRREGEDNDSIYNDGNFVIKPENPQYDFIDTKKSYVD. A helical membrane pass occupies residues 1161–1181; it reads YFKSFVFHYGHWITLMSTLAA. Over 1182-1187 the chain is Extracellular; the sequence is GIAGTS. A helical transmembrane segment spans residues 1188–1210; the sequence is LFALGYIIFTLTMLWSGNNLYVM. The Cytoplasmic segment spans residues 1211-1231; sequence NSTLRSFEHTLKRWNALLGYT. Residues 1232–1252 form a helical membrane-spanning segment; that stretch reads LFTITMKVCLQIFGCVFLSWF. Topologically, residues 1253 to 1299 are extracellular; that stretch reads DQSGGWGKTLCIVRQLFSITCVNNECHVLKELEDFSKACAVETKEGN. The chain crosses the membrane as a helical span at residues 1300-1320; the sequence is IGFDVIALSFLVFQIRIFHSW. Residues 1321–1615 lie on the Cytoplasmic side of the membrane; sequence YFQHCMVEYR…VVNCIGAHTD (295 aa). Positions 1463-1502 are disordered; it reads DTIKDPDSRALIAVSEPEARKPGGTEETDGDEDEDNKDSK. Acidic residues predominate over residues 1488-1498; sequence EETDGDEDEDN. A helical membrane pass occupies residues 1616 to 1636; sequence ILCYFFAIMTQVMTGGLITLP. At 1637–1654 the chain is on the extracellular side; that stretch reads LPLMSLFWGNLSNPRPSK. N-linked (GlcNAc...) asparagine glycosylation occurs at Asn1646. A helical membrane pass occupies residues 1655–1675; the sequence is FFWVTMITYTECVIVIKFVCQ. Residues 1676–1706 are Cytoplasmic-facing; sequence FAFMPYNSITWRTEHQMDPMSLDKLFGVSQR. A helical membrane pass occupies residues 1707-1727; the sequence is DSFALWDIVLLFSLFFHRYML. At 1728-1833 the chain is on the extracellular side; it reads RKLGLWKDAN…KFRYIRDLYP (106 aa). Asn1737 carries N-linked (GlcNAc...) asparagine glycosylation. The chain crosses the membrane as a helical span at residues 1834–1854; that stretch reads IMFGIDVICFLIMTFGYSAFG. The Cytoplasmic segment spans residues 1855–1866; that stretch reads EGGSGNVLDDVK. The helical transmembrane segment at 1867–1887 threads the bilayer; that stretch reads ASRIPVTLVVMLVGMTLAIII. Over 1888 to 1900 the chain is Extracellular; it reads DRALYLRKSVVGK. Residues 1901–1921 form a helical membrane-spanning segment; the sequence is LIYQVLMIAFLHIWVFLVLPN. Over 1922-1930 the chain is Cytoplasmic; sequence MTRRSAISN. Residues 1931–1951 form a helical membrane-spanning segment; the sequence is HVAQALYVIKSCYFLVSAWQI. Residues 1952–2046 are Extracellular-facing; the sequence is RNGYPELCIG…KGKLVKYMMG (95 aa). The helical transmembrane segment at 2047 to 2067 threads the bilayer; the sequence is FPIIIGVVIFIFSPLLLWSLL. Residues 2068–2346 are Cytoplasmic-facing; it reads NQIGTISMPE…VGFIDRAFPS (279 aa). A helical transmembrane segment spans residues 2347-2367; sequence FLAKVFKGGVIAVYLSVILVV. Topologically, residues 2368–2442 are extracellular; that stretch reads GRGLVRGIFT…WTRMSKKKQE (75 aa).

Belongs to the PIEZO (TC 1.A.75) family. Expressed in the pharyngeal-intestinal and spermathecal-uterine valves and in multiple reproductive tissues including the germline, somatic oviduct, and spermatheca. During reproduction, it is expressed in sheath cells, sperm, both spermathecal valves and the spermathecal bag cells.

The protein localises to the cell membrane. Functionally, pore-forming subunit of a mechanosensitive non-specific cation channel. Generates currents characterized by a linear current-voltage relationship. Plays a role in reproduction by positively regulating inter-tissue signaling to promote oocyte maturation, ovulation and fertilization, and sperm navigation from and to the spermatheca. May play a role in regulating cytosolic and endoplasmic reticulum calcium ion release. In Caenorhabditis elegans, this protein is Piezo-type mechanosensitive ion channel component 1.